Here is a 544-residue protein sequence, read N- to C-terminus: Protein angel homolog 2 (544 aa).

The protein belongs to the CCR4/nocturin family.

In Homo sapiens (Human), this protein is Protein angel homolog 2 (ANGEL2).